We begin with the raw amino-acid sequence, 351 residues long: Dihydroorotate dehydrogenase (quinone) (351 aa).

FMN-binding positions include 67 to 71 and T91; that span reads AGFDK. Residue K71 coordinates substrate. 116–120 serves as a coordination point for substrate; that stretch reads NAMGF. The FMN site is built by N145 and N178. Substrate is bound at residue N178. S181 serves as the catalytic Nucleophile. N183 is a binding site for substrate. The FMN site is built by K214 and T242. 243-244 contacts substrate; that stretch reads NT. FMN-binding positions include G262, G291, and 312 to 313; that span reads YS.

It belongs to the dihydroorotate dehydrogenase family. Type 2 subfamily. In terms of assembly, monomer. FMN serves as cofactor.

It is found in the cell membrane. It carries out the reaction (S)-dihydroorotate + a quinone = orotate + a quinol. It functions in the pathway pyrimidine metabolism; UMP biosynthesis via de novo pathway; orotate from (S)-dihydroorotate (quinone route): step 1/1. Functionally, catalyzes the conversion of dihydroorotate to orotate with quinone as electron acceptor. This Helicobacter pylori (strain ATCC 700392 / 26695) (Campylobacter pylori) protein is Dihydroorotate dehydrogenase (quinone) (pyrD).